A 179-amino-acid chain; its full sequence is Translation initiation factor IF-3 (179 aa).

This sequence belongs to the IF-3 family. Monomer.

The protein resides in the cytoplasm. Functionally, IF-3 binds to the 30S ribosomal subunit and shifts the equilibrium between 70S ribosomes and their 50S and 30S subunits in favor of the free subunits, thus enhancing the availability of 30S subunits on which protein synthesis initiation begins. The chain is Translation initiation factor IF-3 from Bradyrhizobium diazoefficiens (strain JCM 10833 / BCRC 13528 / IAM 13628 / NBRC 14792 / USDA 110).